A 384-amino-acid chain; its full sequence is MSLASVIHHGILPPAKSDRIFLTIPVFPPDFRARGWTKSPFSLLINPSLASAANRRLSHLPPIACSRGIDQEDEEKESRELLPHKNDENATTSRSSSSVDSGGLKDYQQEETYKTSFKTVALCVGTAVAFGIGIGLKEGVGKASEFFAGYILEQSLSVDNLFVFVLVFKYFKVPLMYQNKVLTYGIAGAIVFRFTLILLGTATLQKFEAVNLLLAAVLLYSSFKLFASEEDDTDLSDNFIVKTCQRFIPVTSSYDGNRFFTKHDGILKATPLLLTVAVIELSDIAFAVDSIPAVFGVTRDPFIVLTSNLFAILGLRSLYTLISEGMDELEYLQPSIAVVLGFIGVKMILDFFGFHISTEASLGVVALSLSTGVLLSLTNKSSDS.

The N-terminal 48 residues, methionine 1–serine 48, are a transit peptide targeting the chloroplast. At leucine 49–threonine 115 the chain is on the stromal side. The segment at glycine 68–leucine 104 is disordered. Over residues lysine 76–glutamate 88 the composition is skewed to basic and acidic residues. A helical membrane pass occupies residues serine 116–leucine 136. At lysine 137 to glutamate 145 the chain is on the lumenal, thylakoid side. A helical membrane pass occupies residues phenylalanine 146–leucine 166. Residues valine 167–lysine 180 lie on the Stromal side of the membrane. The chain crosses the membrane as a helical span at residues valine 181–threonine 201. Residues alanine 202–lysine 206 are Lumenal, thylakoid-facing. Residues phenylalanine 207–alanine 227 traverse the membrane as a helical segment. Over serine 228–threonine 275 the chain is Stromal. A helical membrane pass occupies residues valine 276 to glycine 296. Topologically, residues valine 297–proline 301 are lumenal, thylakoid. A helical transmembrane segment spans residues phenylalanine 302–isoleucine 322. The Stromal segment spans residues serine 323–serine 335. A helical transmembrane segment spans residues isoleucine 336–isoleucine 356. Position 357 (serine 357) is a topological domain, lumenal, thylakoid. Residues threonine 358–threonine 378 traverse the membrane as a helical segment. Topologically, residues asparagine 379–serine 384 are stromal.

In terms of assembly, interacts with ALB3. Expressed in roots, rosette and cauline leaves, stems and flowers.

It localises to the plastid. It is found in the chloroplast thylakoid membrane. In terms of biological role, integral thylakoid membrane protein that plays a crucial role in thylakoid membrane biogenesis and thylakoid formation in early chloroplast development. Is essential for de novo synthesis of photosystem II (PSII) core proteins and required for efficient insertion of thylakoid membrane proteins, presumably via interaction with ALB3. May assist synthesis of thylakoid membrane proteins at the membrane insertion step. The sequence is that of Thylakoid membrane protein TERC, chloroplastic from Arabidopsis thaliana (Mouse-ear cress).